Here is a 457-residue protein sequence, read N- to C-terminus: Bifunctional protein GlmU (457 aa).

The interval 1–232 (MAKVAAIVLA…PMEVMGVNDR (232 aa)) is pyrophosphorylase. Residues 9–12 (LAAG), K23, Q75, and 80–81 (GT) each bind UDP-N-acetyl-alpha-D-glucosamine. D105 provides a ligand contact to Mg(2+). UDP-N-acetyl-alpha-D-glucosamine contacts are provided by G142, E157, N172, and N230. Residue N230 coordinates Mg(2+). Residues 233–253 (VQLAEAGRIIRVRINKALMVA) form a linker region. Residues 254–457 (GTTIIDPETT…NKEGWKLKNK (204 aa)) are N-acetyltransferase. UDP-N-acetyl-alpha-D-glucosamine is bound by residues R336 and K354. The active-site Proton acceptor is the H366. UDP-N-acetyl-alpha-D-glucosamine contacts are provided by Y369 and N380. Residues 389–390 (NY), S408, A426, and R443 contribute to the acetyl-CoA site.

In the N-terminal section; belongs to the N-acetylglucosamine-1-phosphate uridyltransferase family. It in the C-terminal section; belongs to the transferase hexapeptide repeat family. Homotrimer. The cofactor is Mg(2+).

The protein localises to the cytoplasm. The enzyme catalyses alpha-D-glucosamine 1-phosphate + acetyl-CoA = N-acetyl-alpha-D-glucosamine 1-phosphate + CoA + H(+). The catalysed reaction is N-acetyl-alpha-D-glucosamine 1-phosphate + UTP + H(+) = UDP-N-acetyl-alpha-D-glucosamine + diphosphate. The protein operates within nucleotide-sugar biosynthesis; UDP-N-acetyl-alpha-D-glucosamine biosynthesis; N-acetyl-alpha-D-glucosamine 1-phosphate from alpha-D-glucosamine 6-phosphate (route II): step 2/2. It participates in nucleotide-sugar biosynthesis; UDP-N-acetyl-alpha-D-glucosamine biosynthesis; UDP-N-acetyl-alpha-D-glucosamine from N-acetyl-alpha-D-glucosamine 1-phosphate: step 1/1. It functions in the pathway bacterial outer membrane biogenesis; LPS lipid A biosynthesis. Its function is as follows. Catalyzes the last two sequential reactions in the de novo biosynthetic pathway for UDP-N-acetylglucosamine (UDP-GlcNAc). The C-terminal domain catalyzes the transfer of acetyl group from acetyl coenzyme A to glucosamine-1-phosphate (GlcN-1-P) to produce N-acetylglucosamine-1-phosphate (GlcNAc-1-P), which is converted into UDP-GlcNAc by the transfer of uridine 5-monophosphate (from uridine 5-triphosphate), a reaction catalyzed by the N-terminal domain. In Geotalea daltonii (strain DSM 22248 / JCM 15807 / FRC-32) (Geobacter daltonii), this protein is Bifunctional protein GlmU.